Reading from the N-terminus, the 227-residue chain is Germin-like protein subfamily 3 member 2 (227 aa).

The first 24 residues, 1 to 24 (MEANTLFLLKALCLLCFNVCFTLA), serve as a signal peptide directing secretion. A disulfide bridge links Cys34 with Cys54. 2 N-linked (GlcNAc...) asparagine glycosylation sites follow: Asn56 and Asn75. The Cupin type-1 domain occupies 68 to 213 (SGLKTAGNFT…AFGLSLKQIG (146 aa)). Mn(2+) is bound by residues His115, His117, Glu122, and His161.

The protein belongs to the germin family. Oligomer (believed to be a pentamer but probably hexamer).

It localises to the secreted. The protein localises to the extracellular space. The protein resides in the apoplast. In terms of biological role, may play a role in plant defense. Probably has no oxalate oxidase activity even if the active site is conserved. This Arabidopsis thaliana (Mouse-ear cress) protein is Germin-like protein subfamily 3 member 2.